Here is a 165-residue protein sequence, read N- to C-terminus: 2-C-methyl-D-erythritol 2,4-cyclodiphosphate synthase (165 aa).

A divalent metal cation contacts are provided by aspartate 8 and histidine 10. Residues 8–10 (DVH) and 34–35 (HS) each bind 4-CDP-2-C-methyl-D-erythritol 2-phosphate. A divalent metal cation is bound at residue histidine 42. 4-CDP-2-C-methyl-D-erythritol 2-phosphate-binding positions include 56 to 58 (DIG), 61 to 65 (FPDTD), 100 to 106 (AQAPKMA), 132 to 135 (TTTE), phenylalanine 139, and arginine 142.

Belongs to the IspF family. In terms of assembly, homotrimer. A divalent metal cation is required as a cofactor.

It carries out the reaction 4-CDP-2-C-methyl-D-erythritol 2-phosphate = 2-C-methyl-D-erythritol 2,4-cyclic diphosphate + CMP. Its pathway is isoprenoid biosynthesis; isopentenyl diphosphate biosynthesis via DXP pathway; isopentenyl diphosphate from 1-deoxy-D-xylulose 5-phosphate: step 4/6. Involved in the biosynthesis of isopentenyl diphosphate (IPP) and dimethylallyl diphosphate (DMAPP), two major building blocks of isoprenoid compounds. Catalyzes the conversion of 4-diphosphocytidyl-2-C-methyl-D-erythritol 2-phosphate (CDP-ME2P) to 2-C-methyl-D-erythritol 2,4-cyclodiphosphate (ME-CPP) with a corresponding release of cytidine 5-monophosphate (CMP). In Pectobacterium atrosepticum (strain SCRI 1043 / ATCC BAA-672) (Erwinia carotovora subsp. atroseptica), this protein is 2-C-methyl-D-erythritol 2,4-cyclodiphosphate synthase.